The chain runs to 246 residues: Pyridoxine 5'-phosphate synthase (246 aa).

Asn12 lines the 3-amino-2-oxopropyl phosphate pocket. Position 14-15 (14-15 (DH)) interacts with 1-deoxy-D-xylulose 5-phosphate. A 3-amino-2-oxopropyl phosphate-binding site is contributed by Arg23. His48 functions as the Proton acceptor in the catalytic mechanism. Positions 50 and 55 each coordinate 1-deoxy-D-xylulose 5-phosphate. Catalysis depends on Glu75, which acts as the Proton acceptor. Residue Thr105 coordinates 1-deoxy-D-xylulose 5-phosphate. Residue His196 is the Proton donor of the active site. Residues Gly197 and 218–219 (GH) contribute to the 3-amino-2-oxopropyl phosphate site.

It belongs to the PNP synthase family. In terms of assembly, homooctamer; tetramer of dimers.

The protein localises to the cytoplasm. It catalyses the reaction 3-amino-2-oxopropyl phosphate + 1-deoxy-D-xylulose 5-phosphate = pyridoxine 5'-phosphate + phosphate + 2 H2O + H(+). It functions in the pathway cofactor biosynthesis; pyridoxine 5'-phosphate biosynthesis; pyridoxine 5'-phosphate from D-erythrose 4-phosphate: step 5/5. In terms of biological role, catalyzes the complicated ring closure reaction between the two acyclic compounds 1-deoxy-D-xylulose-5-phosphate (DXP) and 3-amino-2-oxopropyl phosphate (1-amino-acetone-3-phosphate or AAP) to form pyridoxine 5'-phosphate (PNP) and inorganic phosphate. The polypeptide is Pyridoxine 5'-phosphate synthase (Pseudomonas syringae pv. tomato (strain ATCC BAA-871 / DC3000)).